The sequence spans 290 residues: Ribosomal RNA small subunit methyltransferase A (290 aa).

Residues Asn-27, Leu-29, Gly-54, Glu-75, Asp-100, and Asn-125 each contribute to the S-adenosyl-L-methionine site.

The protein belongs to the class I-like SAM-binding methyltransferase superfamily. rRNA adenine N(6)-methyltransferase family. RsmA subfamily.

It localises to the cytoplasm. It catalyses the reaction adenosine(1518)/adenosine(1519) in 16S rRNA + 4 S-adenosyl-L-methionine = N(6)-dimethyladenosine(1518)/N(6)-dimethyladenosine(1519) in 16S rRNA + 4 S-adenosyl-L-homocysteine + 4 H(+). Functionally, specifically dimethylates two adjacent adenosines (A1518 and A1519) in the loop of a conserved hairpin near the 3'-end of 16S rRNA in the 30S particle. May play a critical role in biogenesis of 30S subunits. The polypeptide is Ribosomal RNA small subunit methyltransferase A (Streptococcus pneumoniae (strain JJA)).